Reading from the N-terminus, the 867-residue chain is Coiled-coil domain-containing protein 80 (867 aa).

The first 18 residues, 1–18 (MRARYMLGFGVLCLLTWA), serve as a signal peptide directing secretion. Disordered regions lie at residues 83-121 (RKVL…SSAG) and 282-539 (DSQV…GTLA). A compositionally biased stretch (polar residues) spans 95 to 104 (GTRNPIQQDD). A compositionally biased stretch (basic and acidic residues) spans 288-297 (PTERRKEIRK). Positions 301-370 (RPTTTTTPAP…PRTTRANTTP (70 aa)) are enriched in low complexity. The span at 401–412 (ARYRDNHTSKKE) shows a compositional bias: basic and acidic residues. The segment covering 426–435 (KPTKVRPTKK) has biased composition (basic residues). The span at 436–451 (KNGDKDISNAYEEKYD) shows a compositional bias: basic and acidic residues. Residues 471 to 483 (KRGKGKTDKKKKK) are compositionally biased toward basic residues. Composition is skewed to basic and acidic residues over residues 484 to 504 (DKTD…DGKG) and 514 to 523 (KILEKEDYQK).

It belongs to the CCDC80 family. As to quaternary structure, binds to various extracellular matrix proteins.

Its subcellular location is the secreted. It localises to the extracellular space. The protein localises to the extracellular matrix. Its function is as follows. Promotes cell adhesion and matrix assembly. The protein is Coiled-coil domain-containing protein 80 (ccdc80) of Danio rerio (Zebrafish).